The primary structure comprises 287 residues: Arylamine N-acetyltransferase, liver isozyme (287 aa).

Catalysis depends on cysteine 68, which acts as the Acyl-thioester intermediate. Residues histidine 107 and aspartate 122 contribute to the active site.

This sequence belongs to the arylamine N-acetyltransferase family.

It catalyses the reaction an arylamine + acetyl-CoA = an N-acetylarylamine + CoA. This Gallus gallus (Chicken) protein is Arylamine N-acetyltransferase, liver isozyme.